Consider the following 150-residue polypeptide: Transcription antitermination protein NusB (150 aa).

The protein belongs to the NusB family.

Its function is as follows. Involved in transcription antitermination. Required for transcription of ribosomal RNA (rRNA) genes. Binds specifically to the boxA antiterminator sequence of the ribosomal RNA (rrn) operons. The polypeptide is Transcription antitermination protein NusB (Streptococcus pyogenes serotype M6 (strain ATCC BAA-946 / MGAS10394)).